The following is a 425-amino-acid chain: Light-independent protochlorophyllide reductase subunit N (425 aa).

[4Fe-4S] cluster contacts are provided by C17, C42, and C103.

The protein belongs to the BchN/ChlN family. As to quaternary structure, protochlorophyllide reductase is composed of three subunits; ChlL, ChlN and ChlB. Forms a heterotetramer of two ChlB and two ChlN subunits. [4Fe-4S] cluster serves as cofactor.

It catalyses the reaction chlorophyllide a + oxidized 2[4Fe-4S]-[ferredoxin] + 2 ADP + 2 phosphate = protochlorophyllide a + reduced 2[4Fe-4S]-[ferredoxin] + 2 ATP + 2 H2O. Its pathway is porphyrin-containing compound metabolism; chlorophyll biosynthesis (light-independent). In terms of biological role, component of the dark-operative protochlorophyllide reductase (DPOR) that uses Mg-ATP and reduced ferredoxin to reduce ring D of protochlorophyllide (Pchlide) to form chlorophyllide a (Chlide). This reaction is light-independent. The NB-protein (ChlN-ChlB) is the catalytic component of the complex. The protein is Light-independent protochlorophyllide reductase subunit N of Parasynechococcus marenigrum (strain WH8102).